A 465-amino-acid polypeptide reads, in one-letter code: Asparagine--tRNA ligase (465 aa).

Belongs to the class-II aminoacyl-tRNA synthetase family. In terms of assembly, homodimer.

Its subcellular location is the cytoplasm. The catalysed reaction is tRNA(Asn) + L-asparagine + ATP = L-asparaginyl-tRNA(Asn) + AMP + diphosphate + H(+). This chain is Asparagine--tRNA ligase, found in Hahella chejuensis (strain KCTC 2396).